Here is a 152-residue protein sequence, read N- to C-terminus: Small ribosomal subunit protein uS11B (152 aa).

The disordered stretch occupies residues 131-152 (EDVTPIPSDSTRRKGGRRGRRL). A compositionally biased stretch (basic residues) spans 143–152 (RKGGRRGRRL).

The protein belongs to the universal ribosomal protein uS11 family.

This is Small ribosomal subunit protein uS11B from Anopheles gambiae (African malaria mosquito).